Consider the following 322-residue polypeptide: Ribonuclease Z (322 aa).

H62, H64, D66, H67, H139, D210, and H268 together coordinate Zn(2+). The active-site Proton acceptor is D66.

It belongs to the RNase Z family. In terms of assembly, homodimer. Zn(2+) serves as cofactor.

The catalysed reaction is Endonucleolytic cleavage of RNA, removing extra 3' nucleotides from tRNA precursor, generating 3' termini of tRNAs. A 3'-hydroxy group is left at the tRNA terminus and a 5'-phosphoryl group is left at the trailer molecule.. Functionally, zinc phosphodiesterase, which displays some tRNA 3'-processing endonuclease activity. Probably involved in tRNA maturation, by removing a 3'-trailer from precursor tRNA. This is Ribonuclease Z from Nostoc sp. (strain PCC 7120 / SAG 25.82 / UTEX 2576).